Reading from the N-terminus, the 88-residue chain is Apolipoprotein C-I (88 aa).

Positions 1-26 (MRLFLSLPVLVVVLAMVLEGPAPTQA) are cleaved as a signal peptide.

The protein belongs to the apolipoprotein C1 family.

Its subcellular location is the secreted. Inhibitor of lipoprotein binding to the low density lipoprotein (LDL) receptor, LDL receptor-related protein, and very low density lipoprotein (VLDL) receptor. Associates with high density lipoproteins (HDL) and the triacylglycerol-rich lipoproteins in the plasma and makes up about 10% of the protein of the VLDL and 2% of that of HDL. Appears to interfere directly with fatty acid uptake and is also the major plasma inhibitor of cholesteryl ester transfer protein (CETP). Binds free fatty acids and reduces their intracellular esterification. Modulates the interaction of APOE with beta-migrating VLDL and inhibits binding of beta-VLDL to the LDL receptor-related protein. In Mirounga angustirostris (Northern elephant seal), this protein is Apolipoprotein C-I (APOC1).